A 310-amino-acid chain; its full sequence is tRNA uridine(34) hydroxylase (310 aa).

The Rhodanese domain occupies 124–218 (SDPEVLLIDT…YFEEVPQEES (95 aa)). The active-site Cysteine persulfide intermediate is Cys178.

This sequence belongs to the TrhO family.

It catalyses the reaction uridine(34) in tRNA + AH2 + O2 = 5-hydroxyuridine(34) in tRNA + A + H2O. Functionally, catalyzes oxygen-dependent 5-hydroxyuridine (ho5U) modification at position 34 in tRNAs. This is tRNA uridine(34) hydroxylase from Pseudomonas putida (strain W619).